Reading from the N-terminus, the 258-residue chain is Aquaglyceroporin (258 aa).

At 1–11 (MHMLFYKSYVR) the chain is on the cytoplasmic side. The chain crosses the membrane as a helical span at residues 12–32 (EFIGEFLGTFVLMFLGEGATA). At 33-45 (NFHTTGLSGDWYK) the chain is on the extracellular side. A helical transmembrane segment spans residues 46 to 66 (LCLGWGLAVFFGILVSAKLSG). Glycerol is bound by residues glycine 66, alanine 67, and asparagine 70. Residues 67–87 (AHLNLAVSIGLSSINKFDLKK) lie on the Cytoplasmic side of the membrane. A helical transmembrane segment spans residues 88–108 (IPVYFFAQLLGAFVGTSTVYG). Residues 109–135 (LYHGFISNSKIPQFAWETSRNPSISLT) are Extracellular-facing. Serine 127 contributes to the glycerol binding site. Residues 136–156 (GAFFNELILTGILLLVILVVV) traverse the membrane as a helical segment. Residues 157 to 171 (DENICGKFHILKLSS) are Cytoplasmic-facing. A helical membrane pass occupies residues 172 to 192 (VVGLIILCIGITFGGNTGFAL). Residues glycine 189, phenylalanine 190, asparagine 193, and arginine 196 each contribute to the glycerol site. Topologically, residues 193–217 (NPSRDLGSRFLSLIAYGKDTFTKDN) are extracellular. A helical membrane pass occupies residues 218 to 238 (FYFWVPLVAPCVGSVVFCQFY). At 239–258 (DKVICPLVDLANNEKDGVDL) the chain is on the cytoplasmic side.

It belongs to the MIP/aquaporin (TC 1.A.8) family. As to quaternary structure, homotetramer.

It localises to the cell membrane. It catalyses the reaction H2O(in) = H2O(out). The enzyme catalyses glycerol(in) = glycerol(out). The catalysed reaction is urea(in) = urea(out). It carries out the reaction NH4(+)(in) = NH4(+)(out). It catalyses the reaction methylamine(out) = methylamine(in). The enzyme catalyses formamide(out) = formamide(in). Mediates water and glycerol transport across the cell membrane. Permeable to sugar alcohols of up to five carbons and urea. Permeable to ammonia, methylamine and formamide. The chain is Aquaglyceroporin from Plasmodium falciparum (isolate 3D7).